We begin with the raw amino-acid sequence, 211 residues long: Phosphoheptose isomerase (211 aa).

An SIS domain is found at 50–211 (IAGTFEDGGK…VERMLGYCRL (162 aa)). Residue 65-67 (NGG) participates in substrate binding. Residues histidine 74 and glutamate 78 each coordinate Zn(2+). Substrate-binding positions include glutamate 78, 109-110 (ND), 135-137 (STS), serine 140, and glutamine 188. Zn(2+) is bound by residues glutamine 188 and histidine 196.

It belongs to the SIS family. GmhA subfamily. Zn(2+) is required as a cofactor.

It is found in the cytoplasm. It carries out the reaction 2 D-sedoheptulose 7-phosphate = D-glycero-alpha-D-manno-heptose 7-phosphate + D-glycero-beta-D-manno-heptose 7-phosphate. Its pathway is carbohydrate biosynthesis; D-glycero-D-manno-heptose 7-phosphate biosynthesis; D-glycero-alpha-D-manno-heptose 7-phosphate and D-glycero-beta-D-manno-heptose 7-phosphate from sedoheptulose 7-phosphate: step 1/1. In terms of biological role, catalyzes the isomerization of sedoheptulose 7-phosphate in D-glycero-D-manno-heptose 7-phosphate. This is Phosphoheptose isomerase from Pelodictyon phaeoclathratiforme (strain DSM 5477 / BU-1).